The chain runs to 100 residues: NAD(P)H-quinone oxidoreductase subunit 4L, chloroplastic (100 aa).

Transmembrane regions (helical) follow at residues 1-21, 29-49, and 63-83; these read MFGH…YGLI, ALMC…TFPN, and VFVI…VLAI.

The protein belongs to the complex I subunit 4L family. In terms of assembly, NDH is composed of at least 16 different subunits, 5 of which are encoded in the nucleus.

It localises to the plastid. The protein resides in the chloroplast thylakoid membrane. The enzyme catalyses a plastoquinone + NADH + (n+1) H(+)(in) = a plastoquinol + NAD(+) + n H(+)(out). It carries out the reaction a plastoquinone + NADPH + (n+1) H(+)(in) = a plastoquinol + NADP(+) + n H(+)(out). In terms of biological role, NDH shuttles electrons from NAD(P)H:plastoquinone, via FMN and iron-sulfur (Fe-S) centers, to quinones in the photosynthetic chain and possibly in a chloroplast respiratory chain. The immediate electron acceptor for the enzyme in this species is believed to be plastoquinone. Couples the redox reaction to proton translocation, and thus conserves the redox energy in a proton gradient. This chain is NAD(P)H-quinone oxidoreductase subunit 4L, chloroplastic, found in Huperzia lucidula (Shining clubmoss).